Reading from the N-terminus, the 245-residue chain is Probable phosphatase YcdX (245 aa).

9 residues coordinate Zn(2+): histidine 7, histidine 9, histidine 15, histidine 40, glutamate 73, histidine 101, histidine 131, aspartate 192, and histidine 194.

Belongs to the PHP family. In terms of assembly, homotrimer. It depends on Zn(2+) as a cofactor.

In Escherichia coli (strain K12 / MC4100 / BW2952), this protein is Probable phosphatase YcdX.